The following is a 44-amino-acid chain: Photosystem I reaction center subunit IX (44 aa).

A helical transmembrane segment spans residues 7-27 (YLSTAPVLATLWFGSLAGLLI).

It belongs to the PsaJ family.

The protein resides in the plastid. It localises to the chloroplast thylakoid membrane. In terms of biological role, may help in the organization of the PsaE and PsaF subunits. In Calycanthus floridus var. glaucus (Eastern sweetshrub), this protein is Photosystem I reaction center subunit IX.